The chain runs to 294 residues: Protoheme IX farnesyltransferase (294 aa).

9 helical membrane passes run 25–45 (SLVL…MGAV), 48–68 (LVTL…NCYW), 92–112 (AVAL…LALG), 115–135 (VLTA…YTPL), 141–161 (AAML…WTAV), 170–190 (FSLF…IALF), 216–236 (VVLY…LHIA), 240–260 (YLAA…WGFF), and 272–292 (FFFS…DRVP).

It belongs to the UbiA prenyltransferase family. Protoheme IX farnesyltransferase subfamily.

Its subcellular location is the cell inner membrane. It carries out the reaction heme b + (2E,6E)-farnesyl diphosphate + H2O = Fe(II)-heme o + diphosphate. It participates in porphyrin-containing compound metabolism; heme O biosynthesis; heme O from protoheme: step 1/1. Converts heme B (protoheme IX) to heme O by substitution of the vinyl group on carbon 2 of heme B porphyrin ring with a hydroxyethyl farnesyl side group. This Myxococcus xanthus (strain DK1622) protein is Protoheme IX farnesyltransferase.